A 53-amino-acid polypeptide reads, in one-letter code: UPF0391 membrane protein ESA_03375 (53 aa).

Helical transmembrane passes span 4-24 (WGII…GGLA) and 28-48 (AGAA…SLFM).

Belongs to the UPF0391 family.

It is found in the cell membrane. This is UPF0391 membrane protein ESA_03375 from Cronobacter sakazakii (strain ATCC BAA-894) (Enterobacter sakazakii).